The following is a 204-amino-acid chain: Bcl-2-like protein 10 (204 aa).

The short motif at 86–105 is the BH1 element; it reads LSDSPGPTWGRVVTLVTFAG. The required for Ca(2+) binding stretch occupies residues 118 to 133; sequence WKKWGFQPRLKEQEGD. Residues K119, K120, and K128 each participate in a glycyl lysine isopeptide (Lys-Gly) (interchain with G-Cter in ubiquitin) cross-link. The BH2 signature appears at 156–167; it reads WLQAQGGWDGFC. A helical transmembrane segment spans residues 183–200; it reads LVQAFLSCLLTTAFIYLW.

Belongs to the Bcl-2 family. Interacts with BAX. Interacts with BCL2 and BCL2L1/BCLX. Interacts with APAF1. Interacts with ITPR1, ITPR2 and ITPR3; the interaction with ITPR1 is increased in the presence of AHCLY1. Interacts with AHCYL1. Interacts with HIP1R (via ENTH and I/LWEQ domains). Interacts with CASP9. Interacts with BCL2L11/BIM. Interacts with BIK. Interacts with UBQLN4. Interacts with NME2/NM23-H2. Interacts with PMAIP1/NOXA. Interacts with TPX2. Interacts with UBQLN1; in the cytoplasm. Interacts (via BH1 domain) with BECN1. It depends on Ca(2+) as a cofactor. Monoubiquitinated by UBQLN1; results in stabilization of BCL2L10 protein abundance and in relocalization from mitochondria to cytoplasm. In terms of tissue distribution, widely expressed in adult tissues. Preferentially expressed in lung, liver and kidney.

The protein resides in the mitochondrion. The protein localises to the nucleus membrane. Its subcellular location is the endoplasmic reticulum. It localises to the cytoplasm. It is found in the cytoskeleton. The protein resides in the spindle. Its function is as follows. Promotes cell survival by suppressing apoptosis induced by BAX but not BAK. Increases binding of AHCYL1/IRBIT to ITPR1. Reduces ITPR1-mediated calcium release from the endoplasmic reticulum cooperatively with AHCYL1/IRBIT under normal cellular conditions. Under apoptotic stress conditions, dissociates from ITPR1 and is displaced from mitochondria-associated endoplasmic reticulum membranes, leading to increased Ca(2+) transfer to mitochondria which promotes apoptosis. Required for the correct formation of the microtubule organizing center during oocyte cell division, potentially via regulation of protein abundance and localization of other microtubule organizing center components such as AURKA and TPX2. This is Bcl-2-like protein 10 from Homo sapiens (Human).